A 44-amino-acid chain; its full sequence is Large ribosomal subunit protein bL34 (44 aa).

2 stretches are compositionally biased toward basic residues: residues 1-22 (MKRT…RARM) and 31-44 (IRAR…RLSV). Residues 1–44 (MKRTLGGTSRKRKRTSGFRARMRTPDGRNVIRARRKKGRHRLSV) are disordered.

It belongs to the bacterial ribosomal protein bL34 family.

The protein is Large ribosomal subunit protein bL34 of Nostoc punctiforme (strain ATCC 29133 / PCC 73102).